The chain runs to 196 residues: GTP cyclohydrolase 1 (196 aa).

Zn(2+)-binding residues include C84, H87, and C157.

It belongs to the GTP cyclohydrolase I family. In terms of assembly, toroid-shaped homodecamer, composed of two pentamers of five dimers.

It carries out the reaction GTP + H2O = 7,8-dihydroneopterin 3'-triphosphate + formate + H(+). Its pathway is cofactor biosynthesis; 7,8-dihydroneopterin triphosphate biosynthesis; 7,8-dihydroneopterin triphosphate from GTP: step 1/1. The polypeptide is GTP cyclohydrolase 1 (Corynebacterium glutamicum (strain ATCC 13032 / DSM 20300 / JCM 1318 / BCRC 11384 / CCUG 27702 / LMG 3730 / NBRC 12168 / NCIMB 10025 / NRRL B-2784 / 534)).